The chain runs to 792 residues: Phenylalanine--tRNA ligase beta subunit (792 aa).

The 117-residue stretch at 40-156 folds into the tRNA-binding domain; the sequence is FPRTENLIVG…AKLNDIDPLK (117 aa). In terms of domain architecture, B5 spans 404-472; it reads LKDNLIDFDS…KKINVNNLEL (69 aa). 4 residues coordinate Mg(2+): aspartate 450, aspartate 456, glutamate 459, and glutamate 460.

It belongs to the phenylalanyl-tRNA synthetase beta subunit family. Type 1 subfamily. As to quaternary structure, tetramer of two alpha and two beta subunits. Requires Mg(2+) as cofactor.

The protein resides in the cytoplasm. It carries out the reaction tRNA(Phe) + L-phenylalanine + ATP = L-phenylalanyl-tRNA(Phe) + AMP + diphosphate + H(+). The sequence is that of Phenylalanine--tRNA ligase beta subunit from Malacoplasma penetrans (strain HF-2) (Mycoplasma penetrans).